The sequence spans 362 residues: 3-dehydroquinate synthase (362 aa).

Residues Asp71–Lys76, Gly105–Asp109, Thr129–Thr130, Lys142, and Lys151 each bind NAD(+). Residues Glu184, His247, and His264 each contribute to the Zn(2+) site.

This sequence belongs to the sugar phosphate cyclases superfamily. Dehydroquinate synthase family. Co(2+) is required as a cofactor. It depends on Zn(2+) as a cofactor. NAD(+) serves as cofactor.

It is found in the cytoplasm. The catalysed reaction is 7-phospho-2-dehydro-3-deoxy-D-arabino-heptonate = 3-dehydroquinate + phosphate. The protein operates within metabolic intermediate biosynthesis; chorismate biosynthesis; chorismate from D-erythrose 4-phosphate and phosphoenolpyruvate: step 2/7. Its function is as follows. Catalyzes the conversion of 3-deoxy-D-arabino-heptulosonate 7-phosphate (DAHP) to dehydroquinate (DHQ). This chain is 3-dehydroquinate synthase, found in Blochmanniella pennsylvanica (strain BPEN).